The following is a 317-amino-acid chain: MKTALILLSILGMACAFSMKNLHRRVKIEDSEENGVFKYRPRYYLYKHAYFYPHLKRFPVQGSSDSSEENGDDSSEEEEEEEETSNEGENNEESNEDEDSEAENTTLSATTLGYGEDATPGTGYTGLAAIQLPKKAGDITNKATKEKESDEEEEEEEEGNENEESEAEVDENEQGINGTSTNSTEAENGNGSSGGDNGEEGEEESVTGANAEDTTETGRQGKGTSKTTTSPNGGFEPTTPPQVYRTTSPPFGKTTTVEYEGEYEYTGANEYDNGYEIYESENGEPRGDNYRAYEDEYSYFKGQGYDGYDGQNYYHHQ.

The N-terminal stretch at 1-16 (MKTALILLSILGMACA) is a signal peptide. Phosphoserine is present on residues Ser31, Ser67, Ser74, Ser75, Ser94, and Ser100. The tract at residues 58-254 (FPVQGSSDSS…RTTSPPFGKT (197 aa)) is disordered. Acidic residues predominate over residues 66–102 (SSEENGDDSSEEEEEEEETSNEGENNEESNEDEDSEA). The N-linked (GlcNAc...) asparagine glycan is linked to Asn104. Thr119 and Thr122 each carry an O-linked (GalNAc...) threonine glycan. At Ser149 the chain carries Phosphoserine. A compositionally biased stretch (acidic residues) spans 149 to 173 (SDEEEEEEEEGNENEESEAEVDENE). Residues Asn177, Asn182, and Asn190 are each glycosylated (N-linked (GlcNAc...) asparagine). Over residues 222–232 (KGTSKTTTSPN) the composition is skewed to polar residues. 5 O-linked (GalNAc...) threonine glycosylation sites follow: Thr227, Thr228, Thr229, Thr238, and Thr239. Ser280 is modified (phosphoserine). Positions 286–288 (RGD) match the Integrin-binding motif motif. Sulfotyrosine occurs at positions 313 and 314.

In terms of assembly, monomer. Interacts with integrins; the interaction promotes cell adhesion. In terms of processing, N-glycosylated; glycans consist of sialylated and core-fucosylated bi-, tri- and tetraantennary chains. Post-translationally, O-glycosylated at eight sites; mucin-type glycans contain Gal, GlcNAc, GalNAc and terminal NeuAc. Expressed in bone (at protein level). Expressed in trophoblast cells of placenta (at protein level). Expressed in brain.

The protein resides in the secreted. Functionally, binds tightly to hydroxyapatite. Appears to form an integral part of the mineralized matrix. Probably important to cell-matrix interaction. Promotes adhesion and migration of various cells via the alpha-V/beta-3 integrin receptor (ITGAV:ITGB3). This is Integrin-binding sialoprotein (IBSP) from Homo sapiens (Human).